Reading from the N-terminus, the 181-residue chain is Ion-translocating oxidoreductase complex subunit B (181 aa).

The segment at 1–26 (MLEAVSAVMSLGGMALFAGLGLGYAA) is hydrophobic. A 4Fe-4S domain is found at 32-90 (EADPVVEKLEALLPATNCGMCGHPGCGPYAQAITEGEAINLCTPGGKAVMESIAAMLGV). [4Fe-4S] cluster-binding residues include cysteine 49, cysteine 52, cysteine 57, cysteine 73, cysteine 110, cysteine 113, cysteine 116, cysteine 120, cysteine 140, cysteine 143, cysteine 146, and cysteine 150. 2 4Fe-4S ferredoxin-type domains span residues 101–130 (KVAY…GANK) and 131–160 (QSHT…MQPV).

Belongs to the 4Fe4S bacterial-type ferredoxin family. RnfB subfamily. As to quaternary structure, the complex is composed of six subunits: RnfA, RnfB, RnfC, RnfD, RnfE and RnfG. It depends on [4Fe-4S] cluster as a cofactor.

Its subcellular location is the cell inner membrane. In terms of biological role, part of a membrane-bound complex that couples electron transfer with translocation of ions across the membrane. The chain is Ion-translocating oxidoreductase complex subunit B from Magnetococcus marinus (strain ATCC BAA-1437 / JCM 17883 / MC-1).